Here is a 170-residue protein sequence, read N- to C-terminus: F1 capsule antigen (170 aa).

The signal sequence occupies residues 1–21 (MKKISSVIAIALFGTIATANA). The segment at 100–150 (GNNHQFTTKVIGKDSRDFDISPKVNGENLVGDDVVLATGSQDFFVRSIGSK) is contains potential antigenic determinants that may stimulate T-cells.

The protein resides in the secreted. Its subcellular location is the capsule. The sequence is that of F1 capsule antigen (caf1) from Yersinia pestis.